The following is a 229-amino-acid chain: Choline-phosphate cytidylyltransferase (229 aa).

Residues leucine 6, alanine 8, glycine 9, tyrosine 80, asparagine 82, serine 85, and alanine 101 each coordinate CDP-choline. Aspartate 102 serves as a coordination point for Mg(2+). Tyrosine 185 provides a ligand contact to CDP-choline. Residues glutamate 211 and aspartate 213 each coordinate Mg(2+).

This sequence belongs to the LicC/PntC cytidylyltransferase family. Monomer. Forms dimers in LicC-CDP-Cho-Mg(2+) crystals, but the monomer is probably the biologically functional unit. The cofactor is Mg(2+).

It catalyses the reaction phosphocholine + CTP + H(+) = CDP-choline + diphosphate. The protein operates within cell wall biogenesis; teichoic acid biosynthesis. Its pathway is cell wall biogenesis; lipoteichoic acid biosynthesis. With respect to regulation, mg(2+) in slight excess of CTP gives maximal activity. Strongly inhibited by Ca(2+) and several other metal ions, such as Cd(2+), Co(2+), Cu(2+), Mn(2+), Ni(2+), Zn(2+) and Fe(2+). Also inhibited by Mg(2+) at high concentrations. CDP-Cho is a competitive inhibitor with respect to CTP, whereas diphosphate is a mixed-type inhibitor with respect to CTP. In terms of biological role, cytidylyltransferase involved in the biosynthesis of the phosphocholine containing cell wall constituents, teichoic acid and lipoteichoic acid, which are essential for cell separation and pathogenesis. Catalyzes the activation of phosphocholine (P-Cho) to CDP-choline (CDP-Cho). Can also use phosphoethanolamine and 2-aminoethylphosphonate, with much lower efficiency. Shows lower activity with dCTP, weak activity with ATP and no activity with GTP, TTP, UTP, dATP, dGTP and dTTP. This Streptococcus pneumoniae (strain ATCC BAA-255 / R6) protein is Choline-phosphate cytidylyltransferase.